The primary structure comprises 438 residues: 26S proteasome regulatory subunit 6A (438 aa).

The disordered stretch occupies residues methionine 1 to leucine 24. Positions aspartate 11–glutamate 22 are enriched in polar residues. Residue glycine 226 to threonine 233 participates in ATP binding.

This sequence belongs to the AAA ATPase family.

It is found in the cytoplasm. The protein resides in the nucleus. Its function is as follows. The 26S proteasome is involved in the ATP-dependent degradation of ubiquitinated proteins. The regulatory (or ATPase) complex confers ATP dependency and substrate specificity to the 26S complex. The protein is 26S proteasome regulatory subunit 6A (tbp1) of Schizosaccharomyces pombe (strain 972 / ATCC 24843) (Fission yeast).